We begin with the raw amino-acid sequence, 258 residues long: MQIHPTAIVDSKAELADDVVIKAYSIIGPNVKIGPGTSVGPHAVIDGWTTIGARNQVCSFVAIGHPPQDFSYRDEETRVLIGDDNVFREHVSIHRGTRRGRGTTRVGSRNYIMSAAHIAHDCQIGDNVVMANVAVLGGHVEIGDFAALGGAVAVHQFVRIGTYSFIGGGSGISMDVPPYMLVVGSRPAKLYGLNTTGLKRHDFSANVLSALKKSYRILFRSGLNVRDAVDKIRVEVETCAEVELLLEFVGSSKRGVIR.

This sequence belongs to the transferase hexapeptide repeat family. LpxA subfamily. As to quaternary structure, homotrimer.

The protein resides in the cytoplasm. It carries out the reaction a (3R)-hydroxyacyl-[ACP] + UDP-N-acetyl-alpha-D-glucosamine = a UDP-3-O-[(3R)-3-hydroxyacyl]-N-acetyl-alpha-D-glucosamine + holo-[ACP]. Its pathway is glycolipid biosynthesis; lipid IV(A) biosynthesis; lipid IV(A) from (3R)-3-hydroxytetradecanoyl-[acyl-carrier-protein] and UDP-N-acetyl-alpha-D-glucosamine: step 1/6. Involved in the biosynthesis of lipid A, a phosphorylated glycolipid that anchors the lipopolysaccharide to the outer membrane of the cell. This is Acyl-[acyl-carrier-protein]--UDP-N-acetylglucosamine O-acyltransferase from Syntrophobacter fumaroxidans (strain DSM 10017 / MPOB).